The primary structure comprises 312 residues: F-box protein At1g11270 (312 aa).

One can recognise an F-box domain in the interval 29–80; sequence SVVKLLLPHDVVGLILERLPVESLLRFKCVSNQWKSTIESQCFQERQLIRRM.

In Arabidopsis thaliana (Mouse-ear cress), this protein is F-box protein At1g11270.